The following is a 651-amino-acid chain: Translation factor GUF1 homolog, mitochondrial (651 aa).

Residues 1–26 (MAVTRAAAPMVGNCSSAMLIIGRRYF) constitute a mitochondrion transit peptide. A tr-type G domain is found at 51 to 228 (KKIRNFGIVA…AVVERLPPPK (178 aa)). GTP contacts are provided by residues 60 to 67 (AHVDHGKS), 121 to 125 (DTPGH), and 175 to 178 (NKVD).

Belongs to the TRAFAC class translation factor GTPase superfamily. Classic translation factor GTPase family. LepA subfamily.

Its subcellular location is the mitochondrion inner membrane. The enzyme catalyses GTP + H2O = GDP + phosphate + H(+). Promotes mitochondrial protein synthesis. May act as a fidelity factor of the translation reaction, by catalyzing a one-codon backward translocation of tRNAs on improperly translocated ribosomes. Binds to mitochondrial ribosomes in a GTP-dependent manner. The chain is Translation factor GUF1 homolog, mitochondrial from Brugia malayi (Filarial nematode worm).